Reading from the N-terminus, the 354-residue chain is Tetraacyldisaccharide 4'-kinase (354 aa).

53–60 is a binding site for ATP; it reads AWGGTGKT.

The protein belongs to the LpxK family.

The catalysed reaction is a lipid A disaccharide + ATP = a lipid IVA + ADP + H(+). It participates in glycolipid biosynthesis; lipid IV(A) biosynthesis; lipid IV(A) from (3R)-3-hydroxytetradecanoyl-[acyl-carrier-protein] and UDP-N-acetyl-alpha-D-glucosamine: step 6/6. Transfers the gamma-phosphate of ATP to the 4'-position of a tetraacyldisaccharide 1-phosphate intermediate (termed DS-1-P) to form tetraacyldisaccharide 1,4'-bis-phosphate (lipid IVA). This chain is Tetraacyldisaccharide 4'-kinase, found in Nitratidesulfovibrio vulgaris (strain ATCC 29579 / DSM 644 / CCUG 34227 / NCIMB 8303 / VKM B-1760 / Hildenborough) (Desulfovibrio vulgaris).